An 860-amino-acid polypeptide reads, in one-letter code: Protein argonaute-3 (860 aa).

Residue methionine 1 is modified to N-acetylmethionine. Residues 230 to 349 (PVIQFMCEVL…LPLEVCNIVA (120 aa)) enclose the PAZ domain. The Piwi domain occupies 518-819 (LIIVILPGKT…VAFRARYHLV (302 aa)). Residues 530–567 (YAEVKRVGDTLLGMATQCVQVKNVIKTSPQTLSNLCLK) form an interaction with guide RNA region. The a divalent metal cation site is built by aspartate 598, glutamate 638, and aspartate 670. The interval 758–805 (QGTSRPSHYHVLWDDNFFTADELQLLTYQLCHTYVRCTRSVSIPAPAY) is interaction with guide RNA. Histidine 808 is an a divalent metal cation binding site. Position 825 is a phosphoserine (serine 825).

This sequence belongs to the argonaute family. Ago subfamily. Interacts with EIF4B, IMP8, PRMT5 and TNRC6B. Interacts with APOBEC3F, APOBEC3G and APOBEC3H. Interacts with EDC4. In terms of processing, ubiquitinated on surface-exposed lysines by a SCF-like E3 ubiquitin-protein ligase complex containing ZSWIM8 during target-directed microRNA degradation (TDMD), a process that mediates degradation of microRNAs (miRNAs). Ubiquitination by the SCF-like E3 ubiquitin-protein ligase complex containing ZSWIM8 leads to its subsequent degradation, thereby exposing miRNAs for degradation. ZSWIM8 recognizes and binds AGO3 when it is engaged with a TDMD target.

It localises to the cytoplasm. The protein localises to the P-body. It catalyses the reaction Endonucleolytic cleavage to 5'-phosphomonoester.. In terms of biological role, required for RNA-mediated gene silencing (RNAi). Binds to short RNAs such as microRNAs (miRNAs) and represses the translation of mRNAs which are complementary to them. Proposed to be involved in stabilization of small RNA derivates (siRNA) derived from processed RNA polymerase III-transcribed Alu repeats containing a DR2 retinoic acid response element (RARE) in stem cells and in the subsequent siRNA-dependent degradation of a subset of RNA polymerase II-transcribed coding mRNAs by recruiting a mRNA decapping complex involving EDC4. Possesses RNA slicer activity but only on select RNAs bearing 5'- and 3'-flanking sequences to the region of guide-target complementarity. The chain is Protein argonaute-3 (Ago3) from Mus musculus (Mouse).